The primary structure comprises 292 residues: MAAITASMVAELRAKTDAPMMECKKALTEAEGNLEKAEEILRVKLGNKAGKASSRVTAEGVVAAFVEGTTGALVEVNCETDFVSKNDDFLAFTNEVAKLIAQKNPADVAALSALSIGDETVEAVRTRLIGKIGENMTIRRFQRFEGTQLTSYLHGTRIGVMVAFEGNEVAAKDAAMQAAAMKPVSLSADDVPAELVAKERSVAEQKAAESGKPAEIVAKMVEGSVQKYLKEVSLLNQPFVKNDKQTVEQMLKAANTTVKAFTLYVVGEGIEKKQDDFAAEVAAQVAAAKQQA.

An involved in Mg(2+) ion dislocation from EF-Tu region spans residues 80–83 (TDFV).

Belongs to the EF-Ts family.

Its subcellular location is the cytoplasm. Associates with the EF-Tu.GDP complex and induces the exchange of GDP to GTP. It remains bound to the aminoacyl-tRNA.EF-Tu.GTP complex up to the GTP hydrolysis stage on the ribosome. This is Elongation factor Ts from Ralstonia pickettii (strain 12J).